We begin with the raw amino-acid sequence, 291 residues long: ATP synthase gamma chain (291 aa).

The protein belongs to the ATPase gamma chain family. As to quaternary structure, F-type ATPases have 2 components, CF(1) - the catalytic core - and CF(0) - the membrane proton channel. CF(1) has five subunits: alpha(3), beta(3), gamma(1), delta(1), epsilon(1). CF(0) has three main subunits: a, b and c.

It is found in the cell membrane. In terms of biological role, produces ATP from ADP in the presence of a proton gradient across the membrane. The gamma chain is believed to be important in regulating ATPase activity and the flow of protons through the CF(0) complex. The sequence is that of ATP synthase gamma chain from Streptococcus uberis (strain ATCC BAA-854 / 0140J).